The chain runs to 109 residues: Nucleoid-associated protein VIBHAR_03086 (109 aa).

Disordered regions lie at residues 1 to 21 and 88 to 109; these read MFGKGGMGNLMKQAQQMQDRM and QKEKMASVTGGMQLPPGMKMPF.

This sequence belongs to the YbaB/EbfC family. In terms of assembly, homodimer.

It is found in the cytoplasm. The protein resides in the nucleoid. Binds to DNA and alters its conformation. May be involved in regulation of gene expression, nucleoid organization and DNA protection. The polypeptide is Nucleoid-associated protein VIBHAR_03086 (Vibrio campbellii (strain ATCC BAA-1116)).